Here is a 2300-residue protein sequence, read N- to C-terminus: Adenylate cyclase (2300 aa).

2 stretches are compositionally biased toward polar residues: residues 1 to 21 (MTRN…SSIT) and 28 to 41 (TPTS…TRPL). Disordered stretches follow at residues 1 to 256 (MTRN…GSFL), 272 to 593 (GIRP…DLTR), and 631 to 652 (TKLF…MDED). 2 stretches are compositionally biased toward low complexity: residues 42-61 (SPSL…VSRS) and 92-152 (SSQS…QVSP). Positions 153 to 169 (TGGSRLTQSPTTPSNAS) are enriched in polar residues. Over residues 170-185 (IREHRMSELGGYRREM) the composition is skewed to basic and acidic residues. The segment covering 204–221 (QQQPQQPQQQQQQQQQQQ) has biased composition (low complexity). Residues 228–237 (VSGTFSNLSQ) show a composition bias toward polar residues. The segment covering 303-313 (SIASITTTASS) has biased composition (low complexity). Over residues 333–344 (GDRDDWPGRDSS) the composition is skewed to basic and acidic residues. Residues 345-357 (EISLPQPSHSGPM) show a composition bias toward polar residues. Over residues 410 to 421 (PSRPRTPVPAPE) the composition is skewed to pro residues. Positions 455-469 (DSSQNPPKTSSSARS) are enriched in polar residues. Basic and acidic residues predominate over residues 484–501 (KSNEDPRALKPSLSREDS). Over residues 511 to 550 (NGSSSMMGTRSRAQSPAPSWTGTSRGLKANSISDGTSSPA) the composition is skewed to polar residues. The span at 552–565 (SHKKGILGRFRRHN) shows a compositional bias: basic residues. Positions 631 to 643 (TKLFTSKKSSSAK) are enriched in low complexity. The Ras-associating domain maps to 749 to 841 (SNYYIRVFRS…IDEIGREDNS (93 aa)). 16 LRR repeats span residues 867-890 (NQKL…LYRK), 892-914 (AEIV…FIQA), 915-938 (CTAL…FATA), 939-961 (SKLT…ELSK), 962-986 (LTGL…GAYK), 988-1008 (LRTL…ICEL), 1009-1031 (ETIV…LMKL), 1033-1055 (NLEK…VRDL), 1056-1079 (VSLR…DLPR), 1081-1097 (EILS…SGSF), 1098-1119 (ERLR…KAPV), 1120-1142 (PTLK…IDNL), 1143-1165 (MNLE…IGNL), 1166-1188 (KKLD…IGCL), 1189-1211 (TELR…IWWA), and 1213-1234 (KLEH…ASRA). The tract at residues 1228 to 1336 (PKPASRAPQA…VITPSNGPRK (109 aa)) is disordered. A compositionally biased stretch (polar residues) spans 1253–1263 (ANKNGLLSRTP). Residues 1313 to 1327 (TSVVSRSTTQSSTGV) are compositionally biased toward low complexity. LRR repeat units follow at residues 1349–1369 (SGSL…VFEE), 1373–1396 (LPEL…TIRS), 1398–1420 (PQLV…DFLE), 1422–1445 (HCLL…ISRA), 1447–1469 (KLQV…PYDW), and 1474–1497 (NRDL…YRQP). Residues 1552–1828 (PYGMADTLGK…NKLLIMMIGV (277 aa)) form the PPM-type phosphatase domain. The disordered stretch occupies residues 1847–1867 (FSMPQDDPSHVPPSGNKRRKV). A Guanylate cyclase domain is found at 1892–2029 (SIVFTDIKNS…PMVNKASRIS (138 aa)). 2 residues coordinate Mg(2+): Asp-1897 and Asp-1940. Residues 2272–2300 (LDQAETDDATDNNSSGDVDTLDGSDTEQE) form a disordered region. The segment covering 2290-2300 (DTLDGSDTEQE) has biased composition (acidic residues).

Belongs to the adenylyl cyclase class-4/guanylyl cyclase family. The cofactor is Mg(2+).

The enzyme catalyses ATP = 3',5'-cyclic AMP + diphosphate. In terms of biological role, plays essential roles in regulation of cellular metabolism by catalyzing the synthesis of a second messenger, cAMP. This Neurospora crassa (strain ATCC 24698 / 74-OR23-1A / CBS 708.71 / DSM 1257 / FGSC 987) protein is Adenylate cyclase (cr-1).